The chain runs to 236 residues: Elastase-1 (236 aa).

A Peptidase S1 domain is found at 1 to 236; the sequence is VVGGRVAQPN…AYISWMNGIM (236 aa). A disulfide bond links Cys30 and Cys46. The active-site Charge relay system is His45. Residues Glu59, Asn61, Thr64, Glu66, and Glu69 each coordinate Ca(2+). The active-site Charge relay system is Asp93. 3 cysteine pairs are disulfide-bonded: Cys127-Cys193, Cys158-Cys174, and Cys183-Cys213. The Charge relay system role is filled by Ser187.

This sequence belongs to the peptidase S1 family. Elastase subfamily. Ca(2+) is required as a cofactor. In terms of tissue distribution, pancreas.

Its subcellular location is the secreted. It carries out the reaction Hydrolysis of proteins, including elastin. Preferential cleavage: Ala-|-Xaa.. Acts upon elastin. The polypeptide is Elastase-1 (Salmo salar (Atlantic salmon)).